A 246-amino-acid chain; its full sequence is tRNA pseudouridine synthase A (246 aa).

D53 serves as the catalytic Nucleophile. Residue Y112 coordinates substrate.

Belongs to the tRNA pseudouridine synthase TruA family. Homodimer.

It catalyses the reaction uridine(38/39/40) in tRNA = pseudouridine(38/39/40) in tRNA. Formation of pseudouridine at positions 38, 39 and 40 in the anticodon stem and loop of transfer RNAs. In Anaplasma phagocytophilum (strain HZ), this protein is tRNA pseudouridine synthase A.